The following is a 200-amino-acid chain: Holliday junction resolvase RecU (200 aa).

A disordered region spans residues methionine 1–histidine 25. Polar residues predominate over residues arginine 10 to histidine 25. Positions 85, 87, 100, and 119 each coordinate Mg(2+).

The protein belongs to the RecU family. It depends on Mg(2+) as a cofactor.

The protein localises to the cytoplasm. The catalysed reaction is Endonucleolytic cleavage at a junction such as a reciprocal single-stranded crossover between two homologous DNA duplexes (Holliday junction).. Functionally, endonuclease that resolves Holliday junction intermediates in genetic recombination. Cleaves mobile four-strand junctions by introducing symmetrical nicks in paired strands. Promotes annealing of linear ssDNA with homologous dsDNA. Required for DNA repair, homologous recombination and chromosome segregation. This is Holliday junction resolvase RecU from Bacillus cereus (strain G9842).